Here is a 288-residue protein sequence, read N- to C-terminus: ATP synthase gamma chain (288 aa).

Belongs to the ATPase gamma chain family. In terms of assembly, F-type ATPases have 2 components, CF(1) - the catalytic core - and CF(0) - the membrane proton channel. CF(1) has five subunits: alpha(3), beta(3), gamma(1), delta(1), epsilon(1). CF(0) has three main subunits: a, b and c.

It is found in the cell inner membrane. Functionally, produces ATP from ADP in the presence of a proton gradient across the membrane. The gamma chain is believed to be important in regulating ATPase activity and the flow of protons through the CF(0) complex. The sequence is that of ATP synthase gamma chain from Laribacter hongkongensis (strain HLHK9).